The primary structure comprises 173 residues: Large ribosomal subunit protein uL10 (173 aa).

The protein belongs to the universal ribosomal protein uL10 family. In terms of assembly, part of the ribosomal stalk of the 50S ribosomal subunit. The N-terminus interacts with L11 and the large rRNA to form the base of the stalk. The C-terminus forms an elongated spine to which L12 dimers bind in a sequential fashion forming a multimeric L10(L12)X complex.

Its function is as follows. Forms part of the ribosomal stalk, playing a central role in the interaction of the ribosome with GTP-bound translation factors. This chain is Large ribosomal subunit protein uL10, found in Corynebacterium aurimucosum (strain ATCC 700975 / DSM 44827 / CIP 107346 / CN-1) (Corynebacterium nigricans).